We begin with the raw amino-acid sequence, 305 residues long: tRNA uridine(34) hydroxylase (305 aa).

The Rhodanese domain maps to 125–219 (ADENTVVVDT…YLEEVPREQS (95 aa)). Cys-179 (cysteine persulfide intermediate) is an active-site residue.

Belongs to the TrhO family.

It catalyses the reaction uridine(34) in tRNA + AH2 + O2 = 5-hydroxyuridine(34) in tRNA + A + H2O. Functionally, catalyzes oxygen-dependent 5-hydroxyuridine (ho5U) modification at position 34 in tRNAs. The protein is tRNA uridine(34) hydroxylase of Brucella canis (strain ATCC 23365 / NCTC 10854 / RM-666).